Reading from the N-terminus, the 554-residue chain is Folate synthesis bifunctional protein, mitochondrial (554 aa).

A mitochondrion-targeting transit peptide spans 1 to 42 (MAPLLSQTLIHTGRFLLRRFLEPPPAVISAVAASRVCFHRYY). Positions 90–215 (VIALGSNIGN…SFVLAPLVDL (126 aa)) are HPPK. Residues 273 to 541 (THVMGILNLT…NVRHNADAAK (269 aa)) enclose the Pterin-binding domain. A DHPS region spans residues 275–554 (VMGILNLTPD…AMLRRRRSKG (280 aa)). Asparagine 280 lines the Mg(2+) pocket. (7,8-dihydropterin-6-yl)methyl diphosphate contacts are provided by residues threonine 320, aspartate 357, asparagine 376, aspartate 449, lysine 494, and 529–531 (RVH).

This sequence in the N-terminal section; belongs to the HPPK family. In the C-terminal section; belongs to the DHPS family. It depends on Mg(2+) as a cofactor. As to expression, ubiquitous.

Its subcellular location is the mitochondrion. It carries out the reaction 6-hydroxymethyl-7,8-dihydropterin + ATP = (7,8-dihydropterin-6-yl)methyl diphosphate + AMP + H(+). The enzyme catalyses (7,8-dihydropterin-6-yl)methyl diphosphate + 4-aminobenzoate = 7,8-dihydropteroate + diphosphate. The protein operates within cofactor biosynthesis; tetrahydrofolate biosynthesis; 2-amino-4-hydroxy-6-hydroxymethyl-7,8-dihydropteridine diphosphate from 7,8-dihydroneopterin triphosphate: step 4/4. It functions in the pathway cofactor biosynthesis; tetrahydrofolate biosynthesis; 7,8-dihydrofolate from 2-amino-4-hydroxy-6-hydroxymethyl-7,8-dihydropteridine diphosphate and 4-aminobenzoate: step 1/2. Catalyzes the first two consecutive steps of tetrahydrofolate biosynthesis. In Arabidopsis thaliana (Mouse-ear cress), this protein is Folate synthesis bifunctional protein, mitochondrial.